The chain runs to 373 residues: Phosphoserine aminotransferase (373 aa).

L-glutamate is bound at residue arginine 46. The pyridoxal 5'-phosphate site is built by phenylalanine 104, threonine 150, aspartate 172, and glutamine 195. Lysine 196 is modified (N6-(pyridoxal phosphate)lysine). Asparagine 247–threonine 248 contacts pyridoxal 5'-phosphate.

It belongs to the class-V pyridoxal-phosphate-dependent aminotransferase family. SerC subfamily. As to quaternary structure, homodimer. Pyridoxal 5'-phosphate serves as cofactor.

It is found in the cytoplasm. It carries out the reaction O-phospho-L-serine + 2-oxoglutarate = 3-phosphooxypyruvate + L-glutamate. It catalyses the reaction 4-(phosphooxy)-L-threonine + 2-oxoglutarate = (R)-3-hydroxy-2-oxo-4-phosphooxybutanoate + L-glutamate. It functions in the pathway amino-acid biosynthesis; L-serine biosynthesis; L-serine from 3-phospho-D-glycerate: step 2/3. The protein operates within cofactor biosynthesis; pyridoxine 5'-phosphate biosynthesis; pyridoxine 5'-phosphate from D-erythrose 4-phosphate: step 3/5. Functionally, catalyzes the reversible conversion of 3-phosphohydroxypyruvate to phosphoserine and of 3-hydroxy-2-oxo-4-phosphonooxybutanoate to phosphohydroxythreonine. This is Phosphoserine aminotransferase from Rhodococcus jostii (strain RHA1).